The sequence spans 525 residues: uncharacterized protein (525 aa).

Residue S55 is modified to Phosphoserine. The next 13 membrane-spanning stretches (helical) occupy residues 81–101, 120–140, 147–167, 173–193, 208–228, 238–258, 295–315, 318–338, 350–370, 388–408, 413–433, 454–474, and 484–504; these read AYIV…PNFY, LLGQ…LGPL, KLVY…CALA, LVIS…NVAG, MYMF…GTGV, WLYW…VFTP, FVFF…SLGI, GFVN…YFSI, YMAA…QCWL, FIMT…FAFC, IHYI…YHIW, AFEL…ALMF, and AVVG…YFYG.

This sequence belongs to the major facilitator superfamily. CAR1 family.

The protein resides in the membrane. This is an uncharacterized protein from Schizosaccharomyces pombe (strain 972 / ATCC 24843) (Fission yeast).